A 74-amino-acid chain; its full sequence is Protein kish-B (74 aa).

The signal sequence occupies residues 1-22; it reads MTNVYSLDGILVFGLLFVCTCA. Over 23–52 the chain is Extracellular; it reads YFKKVPRLKTWLLSEKKGVWGVFYKAAVIG. Residues 53-73 form a helical membrane-spanning segment; sequence TRLHAAVAIACIVMAFYVLFI. A topological domain (cytoplasmic) is located at residue lysine 74.

It belongs to the KISH family.

Its subcellular location is the golgi apparatus membrane. In terms of biological role, involved in the early part of the secretory pathway. This chain is Protein kish-B (TMEM167B), found in Bos taurus (Bovine).